A 483-amino-acid chain; its full sequence is Altronate oxidoreductase (483 aa).

Isoleucine 18–alanine 29 provides a ligand contact to NAD(+).

This sequence belongs to the mannitol dehydrogenase family. UxaB subfamily.

The catalysed reaction is D-altronate + NAD(+) = keto-D-tagaturonate + NADH + H(+). It participates in carbohydrate metabolism; pentose and glucuronate interconversion. This Escherichia coli O1:K1 / APEC protein is Altronate oxidoreductase.